Consider the following 576-residue polypeptide: Deformed epidermal autoregulatory factor 1 (576 aa).

Disordered stretches follow at residues 52–76 (VTSSSNDNSGSGGASGGTSGAGGGN), 189–215 (AGGASGVGGGGGGTGGGSSGWSENPST), and 309–362 (ESAS…SGSG). Gly residues-rich tracts occupy residues 61 to 76 (GSGGASGGTSGAGGGN) and 191 to 207 (GASGVGGGGGGTGGGSS). The SAND domain occupies 210-291 (SENPSTQHNE…QSLIDEGTLT (82 aa)). The Nuclear localization signal motif lies at 324–340 (RKRNQTDLDMESGPKRK). Positions 345-362 (HSNNNNSNTNNNNTSGSG) are enriched in low complexity. Zn(2+) contacts are provided by Cys521, Cys524, Cys532, Cys535, Cys541, Cys545, His553, and Cys557. The MYND-type zinc-finger motif lies at 521 to 557 (CANCNREALAECSLCRKTPYCSEFCQRKDWNAHQVEC).

It is found in the nucleus. Functionally, transcription factor that binds the homeotic Deformed (Dfd) response element. High affinity binding sites contain at least 1 TTCG motif surrounded by additional TCG sequences. May be involved in the selective action of Dfd on these sites without binding directly to the Dfd protein. Requirement of DEAF1 activity may be a common feature of enhancers targeted by Dfd. In Drosophila melanogaster (Fruit fly), this protein is Deformed epidermal autoregulatory factor 1 (Deaf1).